Consider the following 358-residue polypeptide: Histidinol-phosphate aminotransferase (358 aa).

Position 218 is an N6-(pyridoxal phosphate)lysine (Lys218).

This sequence belongs to the class-II pyridoxal-phosphate-dependent aminotransferase family. Histidinol-phosphate aminotransferase subfamily. As to quaternary structure, homodimer. It depends on pyridoxal 5'-phosphate as a cofactor.

The catalysed reaction is L-histidinol phosphate + 2-oxoglutarate = 3-(imidazol-4-yl)-2-oxopropyl phosphate + L-glutamate. The protein operates within amino-acid biosynthesis; L-histidine biosynthesis; L-histidine from 5-phospho-alpha-D-ribose 1-diphosphate: step 7/9. This Dehalococcoides mccartyi (strain ATCC BAA-2266 / KCTC 15142 / 195) (Dehalococcoides ethenogenes (strain 195)) protein is Histidinol-phosphate aminotransferase.